The following is a 399-amino-acid chain: MALISRSCGAASRYSSSHLFLPSKGAEAANVYCNRLSTAASTSSSSSPSPSTHNDRKKDLREDGLNLQDFISGELSEKSKWEEYRGNLKREKGERLRLPPWLKTEIPIGKNYNKLKNTLRELNLHTVCEEARCPNIGECWGGGEYATATATIMLMGDTCTRGCRFCSVKTARRPPPLDPDEPYNTAKAIAAWGLDYVVLTSVDRDDIPDGGAEHFAKTVSNIKERNSKILVECLTPDFRGDLAAVEKIALSGLDVYAHNVETVRELQRHVRDPRANFDQSLSVLRHAKKVKSSVLTKTSIMLGLGETDAQIQATLTELRDSGVDCLTLGQYMQPTKRHLKVEEYVTPEKFAFWEKVGQEMGFIYTASGPLVRSSYKAGEFFLKNLLEKRKTEETTATAE.

A mitochondrion-targeting transit peptide spans 1–14; sequence MALISRSCGAASRY. Residues 39 to 52 are compositionally biased toward low complexity; it reads AASTSSSSSPSPST. Residues 39–60 are disordered; it reads AASTSSSSSPSPSTHNDRKKDL. Residues C128, C133, C139, C159, C163, C166, and S374 each coordinate [4Fe-4S] cluster. Positions 144–363 constitute a Radical SAM core domain; sequence EYATATATIM…EKVGQEMGFI (220 aa).

Belongs to the radical SAM superfamily. Lipoyl synthase family. [4Fe-4S] cluster serves as cofactor.

The protein localises to the mitochondrion. It carries out the reaction [[Fe-S] cluster scaffold protein carrying a second [4Fe-4S](2+) cluster] + N(6)-octanoyl-L-lysyl-[protein] + 2 oxidized [2Fe-2S]-[ferredoxin] + 2 S-adenosyl-L-methionine + 4 H(+) = [[Fe-S] cluster scaffold protein] + N(6)-[(R)-dihydrolipoyl]-L-lysyl-[protein] + 4 Fe(3+) + 2 hydrogen sulfide + 2 5'-deoxyadenosine + 2 L-methionine + 2 reduced [2Fe-2S]-[ferredoxin]. Its pathway is protein modification; protein lipoylation via endogenous pathway; protein N(6)-(lipoyl)lysine from octanoyl-[acyl-carrier-protein]: step 2/2. Catalyzes the radical-mediated insertion of two sulfur atoms into the C-6 and C-8 positions of the octanoyl moiety bound to the lipoyl domains of lipoate-dependent enzymes, thereby converting the octanoylated domains into lipoylated derivatives. The protein is Lipoyl synthase, mitochondrial (lias) of Danio rerio (Zebrafish).